Consider the following 94-residue polypeptide: Progonadoliberin-3 (94 aa).

The signal sequence occupies residues 1–23 (MEGKGRVLVQLLMLACVLEVSLC). The residue at position 24 (glutamine 24) is a Pyrrolidone carboxylic acid. Glycine amide is present on glycine 33.

This sequence belongs to the GnRH family.

The protein resides in the secreted. In terms of biological role, stimulates the secretion of gonadotropins. The chain is Progonadoliberin-3 (gnrh3) from Carassius auratus (Goldfish).